The following is a 76-amino-acid chain: MGSFSIWHWLIVLAVVLLLFGRGKIPELMGDVAKGIKNFKQGMSDEDAKDDARDSGRTIDAKADETVNDVKKTTKS.

Residues 1–21 (MGSFSIWHWLIVLAVVLLLFG) form a helical membrane-spanning segment. Residues 43–76 (MSDEDAKDDARDSGRTIDAKADETVNDVKKTTKS) form a disordered region. The span at 50-76 (DDARDSGRTIDAKADETVNDVKKTTKS) shows a compositional bias: basic and acidic residues.

This sequence belongs to the TatA/E family. The Tat system comprises two distinct complexes: a TatABC complex, containing multiple copies of TatA, TatB and TatC subunits, and a separate TatA complex, containing only TatA subunits. Substrates initially bind to the TatABC complex, which probably triggers association of the separate TatA complex to form the active translocon.

The protein localises to the cell inner membrane. In terms of biological role, part of the twin-arginine translocation (Tat) system that transports large folded proteins containing a characteristic twin-arginine motif in their signal peptide across membranes. TatA could form the protein-conducting channel of the Tat system. This chain is Sec-independent protein translocase protein TatA, found in Brucella anthropi (strain ATCC 49188 / DSM 6882 / CCUG 24695 / JCM 21032 / LMG 3331 / NBRC 15819 / NCTC 12168 / Alc 37) (Ochrobactrum anthropi).